The sequence spans 102 residues: Small ribosomal subunit protein uS10 (102 aa).

Belongs to the universal ribosomal protein uS10 family. In terms of assembly, part of the 30S ribosomal subunit.

In terms of biological role, involved in the binding of tRNA to the ribosomes. The chain is Small ribosomal subunit protein uS10 from Streptococcus mutans serotype c (strain ATCC 700610 / UA159).